A 345-amino-acid chain; its full sequence is NADPH dehydrogenase (345 aa).

Residue serine 23 to cysteine 26 coordinates FMN. Tyrosine 28 is a substrate binding site. Residues alanine 60 and glutamine 102 each coordinate FMN. Substrate is bound at residue histidine 164 to histidine 167. Residues arginine 215 and glycine 307–arginine 308 each bind FMN.

This sequence belongs to the NADH:flavin oxidoreductase/NADH oxidase family. NamA subfamily. In terms of assembly, homotetramer. It depends on FMN as a cofactor.

It carries out the reaction A + NADPH + H(+) = AH2 + NADP(+). In terms of biological role, catalyzes the reduction of the double bond of an array of alpha,beta-unsaturated aldehydes and ketones. It also reduces the nitro group of nitroester and nitroaromatic compounds. It could have a role in detoxification processes. The polypeptide is NADPH dehydrogenase (Bacillus cereus (strain AH820)).